The following is a 343-amino-acid chain: Aspartate-semialdehyde dehydrogenase (343 aa).

Position 11–14 (11–14 (TGMV)) interacts with NADP(+). Arginine 109 is a binding site for phosphate. Residue cysteine 148 is the Acyl-thioester intermediate of the active site. Glutamine 174 is a binding site for substrate. 177-178 (SG) lines the NADP(+) pocket. Glutamate 200 contributes to the substrate binding site. Lysine 203 is a phosphate binding site. Arginine 233 is a binding site for substrate. Histidine 240 (proton acceptor) is an active-site residue. 321-322 (NT) serves as a coordination point for NADP(+).

Belongs to the aspartate-semialdehyde dehydrogenase family. In terms of assembly, homodimer.

The catalysed reaction is L-aspartate 4-semialdehyde + phosphate + NADP(+) = 4-phospho-L-aspartate + NADPH + H(+). Its pathway is amino-acid biosynthesis; L-lysine biosynthesis via DAP pathway; (S)-tetrahydrodipicolinate from L-aspartate: step 2/4. The protein operates within amino-acid biosynthesis; L-methionine biosynthesis via de novo pathway; L-homoserine from L-aspartate: step 2/3. It participates in amino-acid biosynthesis; L-threonine biosynthesis; L-threonine from L-aspartate: step 2/5. Catalyzes the NADPH-dependent formation of L-aspartate-semialdehyde (L-ASA) by the reductive dephosphorylation of L-aspartyl-4-phosphate. This Archaeoglobus fulgidus (strain ATCC 49558 / DSM 4304 / JCM 9628 / NBRC 100126 / VC-16) protein is Aspartate-semialdehyde dehydrogenase.